The chain runs to 301 residues: Phosphatidylserine decarboxylase proenzyme (301 aa).

Catalysis depends on charge relay system; for autoendoproteolytic cleavage activity residues D117, H173, and S260. S260 acts as the Schiff-base intermediate with substrate; via pyruvic acid; for decarboxylase activity in catalysis. Pyruvic acid (Ser); by autocatalysis is present on S260.

This sequence belongs to the phosphatidylserine decarboxylase family. PSD-B subfamily. Prokaryotic type II sub-subfamily. As to quaternary structure, heterodimer of a large membrane-associated beta subunit and a small pyruvoyl-containing alpha subunit. Pyruvate serves as cofactor. Is synthesized initially as an inactive proenzyme. Formation of the active enzyme involves a self-maturation process in which the active site pyruvoyl group is generated from an internal serine residue via an autocatalytic post-translational modification. Two non-identical subunits are generated from the proenzyme in this reaction, and the pyruvate is formed at the N-terminus of the alpha chain, which is derived from the carboxyl end of the proenzyme. The autoendoproteolytic cleavage occurs by a canonical serine protease mechanism, in which the side chain hydroxyl group of the serine supplies its oxygen atom to form the C-terminus of the beta chain, while the remainder of the serine residue undergoes an oxidative deamination to produce ammonia and the pyruvoyl prosthetic group on the alpha chain. During this reaction, the Ser that is part of the protease active site of the proenzyme becomes the pyruvoyl prosthetic group, which constitutes an essential element of the active site of the mature decarboxylase.

It localises to the cell membrane. It catalyses the reaction a 1,2-diacyl-sn-glycero-3-phospho-L-serine + H(+) = a 1,2-diacyl-sn-glycero-3-phosphoethanolamine + CO2. It functions in the pathway phospholipid metabolism; phosphatidylethanolamine biosynthesis; phosphatidylethanolamine from CDP-diacylglycerol: step 2/2. Its function is as follows. Catalyzes the formation of phosphatidylethanolamine (PtdEtn) from phosphatidylserine (PtdSer). The sequence is that of Phosphatidylserine decarboxylase proenzyme from Chlamydia trachomatis serovar L2 (strain ATCC VR-902B / DSM 19102 / 434/Bu).